We begin with the raw amino-acid sequence, 116 residues long: uncharacterized protein (116 aa).

The segment at 1 to 72 (MCKHVLNAQV…SDEYCPNCDN (72 aa)) adopts a CHY-type zinc-finger fold. Residues Cys-2, His-4, Cys-16, Cys-17, Cys-23, Cys-26, His-27, His-33, Cys-45, Cys-48, Cys-67, and Cys-70 each coordinate Zn(2+).

Its subcellular location is the cytoplasm. This is an uncharacterized protein from Schizosaccharomyces pombe (strain 972 / ATCC 24843) (Fission yeast).